Reading from the N-terminus, the 202-residue chain is Superoxide dismutase [Cu-Zn], chloroplastic (202 aa).

The N-terminal 48 residues, 1 to 48 (MASQTLVSPSPLSSHSLLRTSFSGVSVKLAPQFSTLATSNFKPLTVVA), are a transit peptide targeting the chloroplast. The Cu cation site is built by histidine 94, histidine 96, and histidine 111. Residues cysteine 105 and cysteine 194 are joined by a disulfide bond. 4 residues coordinate Zn(2+): histidine 111, histidine 119, histidine 128, and aspartate 131. Histidine 168 serves as a coordination point for Cu cation.

The protein belongs to the Cu-Zn superoxide dismutase family. As to quaternary structure, homotetramer. Cu cation serves as cofactor. Requires Zn(2+) as cofactor.

The protein resides in the plastid. It localises to the chloroplast. The enzyme catalyses 2 superoxide + 2 H(+) = H2O2 + O2. Destroys radicals which are normally produced within the cells and which are toxic to biological systems. The polypeptide is Superoxide dismutase [Cu-Zn], chloroplastic (SODCP) (Pisum sativum (Garden pea)).